A 394-amino-acid chain; its full sequence is Elongation factor Tu (394 aa).

The tr-type G domain occupies 10-204 (KEHVNVGTIG…AVDTYIENPV (195 aa)). The G1 stretch occupies residues 19-26 (GHVDHGKT). Residue 19-26 (GHVDHGKT) participates in GTP binding. Thr26 serves as a coordination point for Mg(2+). The G2 stretch occupies residues 60 to 64 (GITIN). A G3 region spans residues 81 to 84 (DCPG). GTP is bound by residues 81-85 (DCPGH) and 136-139 (NKCD). The segment at 136–139 (NKCD) is G4. Positions 174–176 (SAL) are G5.

Belongs to the TRAFAC class translation factor GTPase superfamily. Classic translation factor GTPase family. EF-Tu/EF-1A subfamily. Monomer.

It localises to the cytoplasm. It carries out the reaction GTP + H2O = GDP + phosphate + H(+). Its function is as follows. GTP hydrolase that promotes the GTP-dependent binding of aminoacyl-tRNA to the A-site of ribosomes during protein biosynthesis. In Mycoplasmopsis synoviae (strain 53) (Mycoplasma synoviae), this protein is Elongation factor Tu.